Reading from the N-terminus, the 111-residue chain is Large ribosomal subunit protein uL22 (111 aa).

It belongs to the universal ribosomal protein uL22 family. In terms of assembly, part of the 50S ribosomal subunit.

Functionally, this protein binds specifically to 23S rRNA; its binding is stimulated by other ribosomal proteins, e.g. L4, L17, and L20. It is important during the early stages of 50S assembly. It makes multiple contacts with different domains of the 23S rRNA in the assembled 50S subunit and ribosome. The globular domain of the protein is located near the polypeptide exit tunnel on the outside of the subunit, while an extended beta-hairpin is found that lines the wall of the exit tunnel in the center of the 70S ribosome. This is Large ribosomal subunit protein uL22 from Francisella tularensis subsp. tularensis (strain FSC 198).